A 528-amino-acid chain; its full sequence is Cytochrome P450 monooxygenase ppsD (528 aa).

The helical transmembrane segment at 2–21 (LVLVSLVLCLTGFCLLQWAL) threads the bilayer. A glycan (N-linked (GlcNAc...) asparagine) is linked at asparagine 137. Cysteine 441 lines the heme pocket. Asparagine 450 and asparagine 463 each carry an N-linked (GlcNAc...) asparagine glycan.

Belongs to the cytochrome P450 family. Heme is required as a cofactor.

It is found in the membrane. Functionally, cytochrome P450 monooxygenase; part of the gene cluster that mediates the biosynthesis of 2,4'-dihydroxy-3'-methoxypropiophenone. The first step of the pathway is the conversion of acetate into acetyl-CoA by the acyl-CoA ligase ppsA. Acetyl-CoA is then used as a starter unit by the polyketide synthase ppsB and condensed with 4 malonyl-CoA unit to produce the pentaketide backbone. During polyketide extension, the polykedite chain is probably reduced and dehydrated by the KR and PT domains, respectively. O-methylation seems to be catalyzed by an unknown methyltransferase rather than by the CMeT domain of ppsB. Two hydroxylations and one further decarboxylation step catalyzed by yet unknown enzymes are then required to yield 4'-hydroxy-3'-methoxypropiophenone. PpsC functions as a carrier protein to transport 4'-hydroxy-3'-methoxypropiophenone to a specific cell compartment in which 4'-hydroxy-3'-methoxypropiophenone is hydroxylated to 2,4'-dihydroxy-3'-methoxypropiophenone by a still to be identified enzyme. The chain is Cytochrome P450 monooxygenase ppsD from Aspergillus oryzae (strain ATCC 42149 / RIB 40) (Yellow koji mold).